The primary structure comprises 390 residues: Acetylornithine aminotransferase (390 aa).

Pyridoxal 5'-phosphate-binding positions include G103–T104 and F129. R132 contributes to the N(2)-acetyl-L-ornithine binding site. Residue D214 to Q217 participates in pyridoxal 5'-phosphate binding. Position 243 is an N6-(pyridoxal phosphate)lysine (K243). Residue S271 participates in N(2)-acetyl-L-ornithine binding. Residue T272 coordinates pyridoxal 5'-phosphate. K304 participates in a covalent cross-link: Isoglutamyl lysine isopeptide (Lys-Gln) (interchain with Q-Cter in protein Pup).

This sequence belongs to the class-III pyridoxal-phosphate-dependent aminotransferase family. ArgD subfamily. In terms of assembly, homodimer. Pyridoxal 5'-phosphate serves as cofactor.

The protein localises to the cytoplasm. The catalysed reaction is N(2)-acetyl-L-ornithine + 2-oxoglutarate = N-acetyl-L-glutamate 5-semialdehyde + L-glutamate. Its pathway is amino-acid biosynthesis; L-arginine biosynthesis; N(2)-acetyl-L-ornithine from L-glutamate: step 4/4. The chain is Acetylornithine aminotransferase from Mycolicibacterium smegmatis (strain ATCC 700084 / mc(2)155) (Mycobacterium smegmatis).